The primary structure comprises 97 residues: Large ribosomal subunit protein bL31 (97 aa).

Residues 75–97 are disordered; that stretch reads NKTKKSNQAKVEKQTRHRSINEL. Residues 84 to 97 are compositionally biased toward basic and acidic residues; it reads KVEKQTRHRSINEL.

Belongs to the bacterial ribosomal protein bL31 family. Type A subfamily. In terms of assembly, part of the 50S ribosomal subunit.

Functionally, binds the 23S rRNA. The chain is Large ribosomal subunit protein bL31 from Mycoplasma genitalium (strain ATCC 33530 / DSM 19775 / NCTC 10195 / G37) (Mycoplasmoides genitalium).